A 141-amino-acid chain; its full sequence is Large ribosomal subunit protein uL13 (141 aa).

This sequence belongs to the universal ribosomal protein uL13 family. Part of the 50S ribosomal subunit.

Functionally, this protein is one of the early assembly proteins of the 50S ribosomal subunit, although it is not seen to bind rRNA by itself. It is important during the early stages of 50S assembly. The protein is Large ribosomal subunit protein uL13 of Sulfurovum sp. (strain NBC37-1).